A 158-amino-acid chain; its full sequence is Ribonuclease H (158 aa).

The 142-residue stretch at 2-143 folds into the RNase H type-1 domain; that stretch reads PEKIIELFTD…VDALLNRVMD (142 aa). Residues Asp-11, Glu-49, Asp-71, and Asp-135 each coordinate Mg(2+).

This sequence belongs to the RNase H family. Monomer. Mg(2+) is required as a cofactor.

Its subcellular location is the cytoplasm. The enzyme catalyses Endonucleolytic cleavage to 5'-phosphomonoester.. Endonuclease that specifically degrades the RNA of RNA-DNA hybrids. This is Ribonuclease H from Acidithiobacillus ferrooxidans (strain ATCC 23270 / DSM 14882 / CIP 104768 / NCIMB 8455) (Ferrobacillus ferrooxidans (strain ATCC 23270)).